Here is a 408-residue protein sequence, read N- to C-terminus: Putative FBD-associated F-box protein At5g50270 (408 aa).

Residues 1-54 (MDRISGLPDELLLRVLSLLPNVKDVVVTMVLSKRWQFLWMMVPKLVYDDSYQNL) enclose the F-box domain. One can recognise an FBD domain in the interval 345–408 (PLRDDLSSVP…VNPDKKYEMI (64 aa)).

The polypeptide is Putative FBD-associated F-box protein At5g50270 (Arabidopsis thaliana (Mouse-ear cress)).